The primary structure comprises 2376 residues: Cell morphogenesis protein PAG1 (2376 aa).

The tract at residues Met-1 to Asn-30 is disordered. Ser-141 is subject to Phosphoserine. The segment at Ser-275–Gly-294 is disordered. Ser-1144 is subject to Phosphoserine. Residue Thr-2264 is modified to Phosphothreonine. A phosphoserine mark is found at Ser-2267 and Ser-2355.

It to S.pombe mor2. In terms of assembly, associates with CBK1.

Functionally, seems to play a role in cell morphogenesis. This chain is Cell morphogenesis protein PAG1 (TAO3), found in Saccharomyces cerevisiae (strain ATCC 204508 / S288c) (Baker's yeast).